The following is a 359-amino-acid chain: Phospho-N-acetylmuramoyl-pentapeptide-transferase (359 aa).

10 helical membrane passes run 3–23 (QIII…PVLI), 55–75 (VAIL…GIAF), 84–104 (GLLV…DDFI), 117–137 (TSKT…VLQF), 156–176 (IATV…LVMS), 187–207 (LDGL…IVTF), 231–251 (LAVI…WNAA), 255–275 (IFMG…LSVT), 280–300 (LLAV…VLQI), and 334–354 (FWLL…GEWL).

Belongs to the glycosyltransferase 4 family. MraY subfamily. It depends on Mg(2+) as a cofactor.

It localises to the cell membrane. The enzyme catalyses UDP-N-acetyl-alpha-D-muramoyl-L-alanyl-gamma-D-glutamyl-meso-2,6-diaminopimeloyl-D-alanyl-D-alanine + di-trans,octa-cis-undecaprenyl phosphate = di-trans,octa-cis-undecaprenyl diphospho-N-acetyl-alpha-D-muramoyl-L-alanyl-D-glutamyl-meso-2,6-diaminopimeloyl-D-alanyl-D-alanine + UMP. The protein operates within cell wall biogenesis; peptidoglycan biosynthesis. Catalyzes the initial step of the lipid cycle reactions in the biosynthesis of the cell wall peptidoglycan: transfers peptidoglycan precursor phospho-MurNAc-pentapeptide from UDP-MurNAc-pentapeptide onto the lipid carrier undecaprenyl phosphate, yielding undecaprenyl-pyrophosphoryl-MurNAc-pentapeptide, known as lipid I. The sequence is that of Phospho-N-acetylmuramoyl-pentapeptide-transferase from Mycobacteroides abscessus (strain ATCC 19977 / DSM 44196 / CCUG 20993 / CIP 104536 / JCM 13569 / NCTC 13031 / TMC 1543 / L948) (Mycobacterium abscessus).